Reading from the N-terminus, the 447-residue chain is Tubulin alpha-1 chain (447 aa).

The GTP site is built by glutamine 11, glutamate 72, serine 141, glycine 145, threonine 146, threonine 180, asparagine 207, and asparagine 229. Glutamate 72 contacts Mg(2+). Glutamate 255 is an active-site residue.

This sequence belongs to the tubulin family. Dimer of alpha and beta chains. A typical microtubule is a hollow water-filled tube with an outer diameter of 25 nm and an inner diameter of 15 nM. Alpha-beta heterodimers associate head-to-tail to form protofilaments running lengthwise along the microtubule wall with the beta-tubulin subunit facing the microtubule plus end conferring a structural polarity. Microtubules usually have 13 protofilaments but different protofilament numbers can be found in some organisms and specialized cells. Mg(2+) is required as a cofactor.

It is found in the cytoplasm. Its subcellular location is the cytoskeleton. The catalysed reaction is GTP + H2O = GDP + phosphate + H(+). Its function is as follows. Tubulin is the major constituent of microtubules, a cylinder consisting of laterally associated linear protofilaments composed of alpha- and beta-tubulin heterodimers. Microtubules grow by the addition of GTP-tubulin dimers to the microtubule end, where a stabilizing cap forms. Below the cap, tubulin dimers are in GDP-bound state, owing to GTPase activity of alpha-tubulin. This chain is Tubulin alpha-1 chain (TUB1), found in Saccharomyces cerevisiae (strain ATCC 204508 / S288c) (Baker's yeast).